The following is a 365-amino-acid chain: Phosphate acyltransferase (365 aa).

This sequence belongs to the PlsX family. In terms of assembly, homodimer. Probably interacts with PlsY.

The protein resides in the cytoplasm. It catalyses the reaction a fatty acyl-[ACP] + phosphate = an acyl phosphate + holo-[ACP]. Its pathway is lipid metabolism; phospholipid metabolism. Its function is as follows. Catalyzes the reversible formation of acyl-phosphate (acyl-PO(4)) from acyl-[acyl-carrier-protein] (acyl-ACP). This enzyme utilizes acyl-ACP as fatty acyl donor, but not acyl-CoA. In Picosynechococcus sp. (strain ATCC 27264 / PCC 7002 / PR-6) (Agmenellum quadruplicatum), this protein is Phosphate acyltransferase.